Here is a 172-residue protein sequence, read N- to C-terminus: Ribosome maturation factor RimM (172 aa).

One can recognise a PRC barrel domain in the interval 98-171 (PGEYYYHQIV…KVIVELMEGL (74 aa)).

This sequence belongs to the RimM family. As to quaternary structure, binds ribosomal protein uS19.

It is found in the cytoplasm. Its function is as follows. An accessory protein needed during the final step in the assembly of 30S ribosomal subunit, possibly for assembly of the head region. Essential for efficient processing of 16S rRNA. May be needed both before and after RbfA during the maturation of 16S rRNA. It has affinity for free ribosomal 30S subunits but not for 70S ribosomes. This chain is Ribosome maturation factor RimM, found in Levilactobacillus brevis (strain ATCC 367 / BCRC 12310 / CIP 105137 / JCM 1170 / LMG 11437 / NCIMB 947 / NCTC 947) (Lactobacillus brevis).